A 109-amino-acid polypeptide reads, in one-letter code: MSQVELQHILWLLLAIGLEIIANIWLKFSDGFRRPVYGVASLAAVLAAFSALGQAVEGIDLAVAYALWGGFGIAATVAAGWIMFGQRLNRKGWAGLGLLLVGMVIIKLA.

4 helical membrane-spanning segments follow: residues 6–26 (LQHILWLLLAIGLEIIANIWL), 36–56 (VYGVASLAAVLAAFSALGQAV), 64–84 (AYALWGGFGIAATVAAGWIMF), and 88–108 (LNRKGWAGLGLLLVGMVIIKL).

Belongs to the drug/metabolite transporter (DMT) superfamily. Small multidrug resistance (SMR) (TC 2.A.7.1) family. MdtI subfamily. As to quaternary structure, forms a complex with MdtJ.

It is found in the cell inner membrane. Functionally, catalyzes the excretion of spermidine. The protein is Spermidine export protein MdtI (mdtI) of Cronobacter sakazakii (strain ATCC BAA-894) (Enterobacter sakazakii).